We begin with the raw amino-acid sequence, 146 residues long: Ribosome-binding factor A (146 aa).

A disordered region spans residues 121–146 (KQQQFGSADDVTENDIDEADDTEGKA). Residues 130–146 (DVTENDIDEADDTEGKA) are compositionally biased toward acidic residues.

This sequence belongs to the RbfA family. In terms of assembly, monomer. Binds 30S ribosomal subunits, but not 50S ribosomal subunits or 70S ribosomes.

It is found in the cytoplasm. Its function is as follows. One of several proteins that assist in the late maturation steps of the functional core of the 30S ribosomal subunit. Associates with free 30S ribosomal subunits (but not with 30S subunits that are part of 70S ribosomes or polysomes). Required for efficient processing of 16S rRNA. May interact with the 5'-terminal helix region of 16S rRNA. The polypeptide is Ribosome-binding factor A (Shewanella sp. (strain MR-4)).